The chain runs to 385 residues: 1-deoxy-D-xylulose 5-phosphate reductoisomerase (385 aa).

Residues threonine 10, glycine 11, serine 12, isoleucine 13, and asparagine 124 each coordinate NADPH. Lysine 125 is a 1-deoxy-D-xylulose 5-phosphate binding site. Glutamate 126 contributes to the NADPH binding site. Aspartate 150 provides a ligand contact to Mn(2+). Serine 151, glutamate 152, serine 176, and histidine 199 together coordinate 1-deoxy-D-xylulose 5-phosphate. Glutamate 152 serves as a coordination point for Mn(2+). Glycine 205 lines the NADPH pocket. Residues serine 212, asparagine 217, lysine 218, and glutamate 221 each contribute to the 1-deoxy-D-xylulose 5-phosphate site. Glutamate 221 contacts Mn(2+).

This sequence belongs to the DXR family. Mg(2+) serves as cofactor. It depends on Mn(2+) as a cofactor.

It carries out the reaction 2-C-methyl-D-erythritol 4-phosphate + NADP(+) = 1-deoxy-D-xylulose 5-phosphate + NADPH + H(+). Its pathway is isoprenoid biosynthesis; isopentenyl diphosphate biosynthesis via DXP pathway; isopentenyl diphosphate from 1-deoxy-D-xylulose 5-phosphate: step 1/6. In terms of biological role, catalyzes the NADPH-dependent rearrangement and reduction of 1-deoxy-D-xylulose-5-phosphate (DXP) to 2-C-methyl-D-erythritol 4-phosphate (MEP). The protein is 1-deoxy-D-xylulose 5-phosphate reductoisomerase of Clostridium botulinum (strain Alaska E43 / Type E3).